Consider the following 229-residue polypeptide: Clathrin light chain B (229 aa).

Composition is skewed to low complexity over residues 1–17 (MAED…GAPE) and 45–58 (GAPA…AQPG). Residues 1–80 (MAEDFGFFSS…TVNGDVFQEA (80 aa)) are disordered. Phosphoserine is present on residues Ser11 and Ser13. The segment at 93–155 (ADRLTQEPES…QVEKNKINNR (63 aa)) is involved in binding clathrin heavy chain. Thr187 carries the post-translational modification Phosphothreonine. Cysteines 199 and 209 form a disulfide. An N6-acetyllysine modification is found at Lys204. Ser217 is subject to Phosphoserine.

Belongs to the clathrin light chain family. Clathrin coats are formed from molecules containing 3 heavy chains and 3 light chains. Interacts (via N-terminus) with HIP1. Interacts with HIP1R.

Its subcellular location is the cytoplasmic vesicle membrane. It is found in the membrane. The protein localises to the coated pit. Its function is as follows. Clathrin is the major protein of the polyhedral coat of coated pits and vesicles. This chain is Clathrin light chain B (Cltb), found in Rattus norvegicus (Rat).